A 112-amino-acid chain; its full sequence is 2Fe-2S ferredoxin (112 aa).

Positions Ile-5–Thr-107 constitute a 2Fe-2S ferredoxin-type domain. 4 residues coordinate [2Fe-2S] cluster: Cys-42, Cys-48, Cys-51, and Cys-88.

It belongs to the adrenodoxin/putidaredoxin family. [2Fe-2S] cluster is required as a cofactor.

Its function is as follows. Ferredoxin are iron-sulfur proteins that transfer electrons in a wide variety of metabolic reactions. The protein is 2Fe-2S ferredoxin (fdxB) of Rickettsia conorii (strain ATCC VR-613 / Malish 7).